The sequence spans 106 residues: Nucleoid-associated protein XAC1110 (106 aa).

Over residues 80-89 the composition is skewed to basic and acidic residues; the sequence is KIDAESKDRM. The interval 80 to 106 is disordered; that stretch reads KIDAESKDRMGSATAGMQLPPGMKLPF.

Belongs to the YbaB/EbfC family. As to quaternary structure, homodimer.

The protein resides in the cytoplasm. Its subcellular location is the nucleoid. In terms of biological role, binds to DNA and alters its conformation. May be involved in regulation of gene expression, nucleoid organization and DNA protection. This is Nucleoid-associated protein XAC1110 from Xanthomonas axonopodis pv. citri (strain 306).